We begin with the raw amino-acid sequence, 215 residues long: Small ribosomal subunit protein eS1 (215 aa).

It belongs to the eukaryotic ribosomal protein eS1 family.

This Thermoplasma volcanium (strain ATCC 51530 / DSM 4299 / JCM 9571 / NBRC 15438 / GSS1) protein is Small ribosomal subunit protein eS1.